The sequence spans 62 residues: Photosystem II reaction center protein Z (62 aa).

The next 2 membrane-spanning stretches (helical) occupy residues 8 to 28 and 41 to 61; these read AVFA…VVFA and FSGT…NSLI.

It belongs to the PsbZ family. As to quaternary structure, PSII is composed of 1 copy each of membrane proteins PsbA, PsbB, PsbC, PsbD, PsbE, PsbF, PsbH, PsbI, PsbJ, PsbK, PsbL, PsbM, PsbT, PsbY, PsbZ, Psb30/Ycf12, at least 3 peripheral proteins of the oxygen-evolving complex and a large number of cofactors. It forms dimeric complexes.

It localises to the plastid. The protein resides in the chloroplast thylakoid membrane. Its function is as follows. May control the interaction of photosystem II (PSII) cores with the light-harvesting antenna, regulates electron flow through the 2 photosystem reaction centers. PSII is a light-driven water plastoquinone oxidoreductase, using light energy to abstract electrons from H(2)O, generating a proton gradient subsequently used for ATP formation. In Arabidopsis thaliana (Mouse-ear cress), this protein is Photosystem II reaction center protein Z.